A 353-amino-acid chain; its full sequence is Phospho-N-acetylmuramoyl-pentapeptide-transferase (353 aa).

10 helical membrane-spanning segments follow: residues 22–42 (FAFFIALCLSLFLMPKFITWA), 65–85 (TPTMGGLIFISSAVIASLFCI), 88–108 (DNIFAISALLCLILFCLIGLI), 129–149 (LLAQIIAGLICILPLYFSSEL), 161–181 (PLFDMEIFAIAFWILVLISSS), 192–212 (GLATVPSIFSLSTLGIFLYLS), 228–248 (GLGEVVIICAALIGALMGFLW), 256–276 (VFMGDSGSLALGGFIGFLAII), 281–301 (ILLLLIGFVFVLETVSVILQV), and 330–350 (KIIVRFWMIALLSNLLALASI).

The protein belongs to the glycosyltransferase 4 family. MraY subfamily. Mg(2+) is required as a cofactor.

The protein resides in the cell inner membrane. The enzyme catalyses UDP-N-acetyl-alpha-D-muramoyl-L-alanyl-gamma-D-glutamyl-meso-2,6-diaminopimeloyl-D-alanyl-D-alanine + di-trans,octa-cis-undecaprenyl phosphate = di-trans,octa-cis-undecaprenyl diphospho-N-acetyl-alpha-D-muramoyl-L-alanyl-D-glutamyl-meso-2,6-diaminopimeloyl-D-alanyl-D-alanine + UMP. It participates in cell wall biogenesis; peptidoglycan biosynthesis. In terms of biological role, catalyzes the initial step of the lipid cycle reactions in the biosynthesis of the cell wall peptidoglycan: transfers peptidoglycan precursor phospho-MurNAc-pentapeptide from UDP-MurNAc-pentapeptide onto the lipid carrier undecaprenyl phosphate, yielding undecaprenyl-pyrophosphoryl-MurNAc-pentapeptide, known as lipid I. In Campylobacter jejuni (strain RM1221), this protein is Phospho-N-acetylmuramoyl-pentapeptide-transferase.